Consider the following 297-residue polypeptide: 3-mercaptopyruvate sulfurtransferase (297 aa).

The residue at position 2 (A2) is an N-acetylalanine. Phosphoserine occurs at positions 3, 15, 23, and 35. The Rhodanese 1 domain occupies 25–144; sequence AGQPLQLLDA…WLRQNLPLSS (120 aa). N6-acetyllysine; alternate is present on K40. K40 carries the post-translational modification N6-succinyllysine; alternate. A hinge region spans residues 145–160; it reads GKSQPAPAEFRAQLDP. Residues K146 and K164 each carry the N6-succinyllysine modification. In terms of domain architecture, Rhodanese 2 spans 174–288; the sequence is ESRRFQVVDS…WYMRARPEDV (115 aa). R188 serves as a coordination point for substrate. C248 (cysteine persulfide intermediate) is an active-site residue.

Monomer (active form). Homodimer; disulfide-linked (inactive form).

The protein localises to the cytoplasm. It is found in the mitochondrion. The protein resides in the synapse. Its subcellular location is the synaptosome. It catalyses the reaction 2-oxo-3-sulfanylpropanoate + [thioredoxin]-dithiol = [thioredoxin]-disulfide + hydrogen sulfide + pyruvate + H(+). With respect to regulation, by oxidative stress, and thioredoxin. Under oxidative stress conditions, the catalytic cysteine site is converted to a sulfenate which inhibits the MPST enzyme activity. Reduced thioredoxin cleaves an intersubunit disulfide bond to turn on the redox switch and reactivate the enzyme. Transfer of a sulfur ion to cyanide or to other thiol compounds. Also has weak rhodanese activity. Detoxifies cyanide and is required for thiosulfate biosynthesis. Acts as an antioxidant. In combination with cysteine aminotransferase (CAT), contributes to the catabolism of cysteine and is an important producer of hydrogen sulfide in the brain, retina and vascular endothelial cells. Hydrogen sulfide H(2)S is an important synaptic modulator, signaling molecule, smooth muscle contractor and neuroprotectant. Its production by the 3MST/CAT pathway is regulated by calcium ions. The chain is 3-mercaptopyruvate sulfurtransferase (MPST) from Homo sapiens (Human).